A 256-amino-acid polypeptide reads, in one-letter code: MTTLLTLQDVCVVFDDRHVIDNVSLSIESNKIITLIGPNGAGKSTLVKTILGLQKPTSGTIKKEKKLRIGYVPQKLHLNDSLPLSVHGFLKLAGKYSQQEHLSALKLVEAEHLLNSNMHKLSGGESQRVLLARALLQRPDLLVLDEPAQGVDVQGQISLYALIESIRHRFNCAVFMVSHDLHLVMAKTDEVICLQHHICCSGAPESISKHPKYIALFGQQRDQQLAFYHHEHHHNHDLSGEPSDGSCCSKNKKAHQ.

The region spanning 5–220 (LTLQDVCVVF…PKYIALFGQQ (216 aa)) is the ABC transporter domain. 37-44 (GPNGAGKS) serves as a coordination point for ATP. Positions 232–256 (HHHNHDLSGEPSDGSCCSKNKKAHQ) are disordered.

It belongs to the ABC transporter superfamily. Zinc importer (TC 3.A.1.15.5) family. As to quaternary structure, the complex is composed of two ATP-binding proteins (ZnuC), two transmembrane proteins (ZnuB) and a solute-binding protein (ZnuA).

The protein resides in the cell inner membrane. It catalyses the reaction Zn(2+)(out) + ATP(in) + H2O(in) = Zn(2+)(in) + ADP(in) + phosphate(in) + H(+)(in). Functionally, part of the ABC transporter complex ZnuABC involved in zinc import. Responsible for energy coupling to the transport system. This chain is Zinc import ATP-binding protein ZnuC 1, found in Aliivibrio fischeri (strain ATCC 700601 / ES114) (Vibrio fischeri).